Here is a 188-residue protein sequence, read N- to C-terminus: Cell division protein ZapC (188 aa).

It belongs to the ZapC family. As to quaternary structure, interacts directly with FtsZ.

It localises to the cytoplasm. Functionally, contributes to the efficiency of the cell division process by stabilizing the polymeric form of the cell division protein FtsZ. Acts by promoting interactions between FtsZ protofilaments and suppressing the GTPase activity of FtsZ. This is Cell division protein ZapC from Psychromonas ingrahamii (strain DSM 17664 / CCUG 51855 / 37).